Consider the following 219-residue polypeptide: tRNA (guanine-N(7)-)-methyltransferase (219 aa).

S-adenosyl-L-methionine-binding residues include Glu-51, Glu-76, Asp-103, and Asp-125. The active site involves Asp-125. Residues Lys-129, Asp-161, and 199-202 contribute to the substrate site; that span reads TRYE.

Belongs to the class I-like SAM-binding methyltransferase superfamily. TrmB family.

The catalysed reaction is guanosine(46) in tRNA + S-adenosyl-L-methionine = N(7)-methylguanosine(46) in tRNA + S-adenosyl-L-homocysteine. Its pathway is tRNA modification; N(7)-methylguanine-tRNA biosynthesis. In terms of biological role, catalyzes the formation of N(7)-methylguanine at position 46 (m7G46) in tRNA. This chain is tRNA (guanine-N(7)-)-methyltransferase, found in Hyphomonas neptunium (strain ATCC 15444).